We begin with the raw amino-acid sequence, 448 residues long: Tryptamine benzoyltransferase 2 (448 aa).

The tract at residues methionine 1–leucine 20 is disordered. Catalysis depends on proton acceptor residues histidine 155 and aspartate 386.

Belongs to the plant acyltransferase family.

In terms of biological role, hydroxycinnamoyl transferase that catalyzes the transfer of an acyl from benzoyl-CoA to tryptamine, to produce benzoyl tryptamine. Serotonin and tyramine serve as acyl acceptors in vitro. Specific for benzoyl-CoA as acyl donor. Has no activity with p-coumaroyl-CoA, caffeoyl-CoA, or feruloyl-CoA as acyl donors. The protein is Tryptamine benzoyltransferase 2 of Oryza sativa subsp. japonica (Rice).